A 264-amino-acid polypeptide reads, in one-letter code: Short chain dehydrogenase/reductase nsrJ (264 aa).

NADP(+) contacts are provided by Ile-24, Asp-70, Asn-97, and Arg-130. Catalysis depends on proton donor residues Ser-146 and Ser-147. 3 residues coordinate NADP(+): Tyr-161, Lys-165, and Thr-196. Residue Tyr-161 is the Proton acceptor of the active site. Lys-165 acts as the Lowers pKa of active site Tyr in catalysis.

It belongs to the short-chain dehydrogenases/reductases (SDR) family.

Its pathway is secondary metabolite biosynthesis. In terms of biological role, short chain dehydrogenase/reductase; part of the gene cluster that mediates the biosynthesis of the tetrahydroxanthone dimer neosartorin, which exhibits antibacterial activity. The two different monomeric units appear to be synthesized by the same set of enzymes, among which the Baeyer-Villiger monooxygenase nsrF is the key enzyme for the divergence of the biosynthetic routes. The pathway begins with the synthesis of atrochrysone thioester by the polyketide synthase nsrB. The atrochrysone carboxyl ACP thioesterase nsrC then breaks the thioester bond and releases the atrochrysone carboxylic acid from AacuL. Atrochrysone carboxylic acid is decarboxylated by the decarboxylase nsrE, and oxidized by the anthrone oxygenase nsrD to yield emodin. Emodin is then reduced to emodin hydroquinone by the oxidoreductase nsrR. A-ring reduction by the short chain dehydrogenase nsrJ, dehydration by the scytalone dehydratase-like protein nsrI and probable spontaneous re-oxidation, results in overall deoxygenation to chrysophanol. The Baeyer-Villiger monooxygenase nsrF accepts chrysophanol as a substrate to insert one oxygen atom at two different positions to yield the precursors of both monomric units. NsrF is promiscuous/flexible in interacting with the 2 (non methylated and methylated) aromatic rings of chrysophanol, thus diverging the biosynthetic pathway at this point. After the hydrolysis of the lactones, methylesterification by the methyltransferase nsrG yields respectively moniliphenone and 2,2',6'-trihydroxy-4-methyl-6-methoxya-cyldiphenylmethanone. The next steps are the hydroxylation by the FAD-dependent monooxygenase nsrK, followed by isomerization by the monooxygenase nsrQ. The short chain dehydrogenase/reductase nsrO then catalyzes the C-5 ketoreduction to give the xanthone skeleton of blennolide C and 5-acetylblennolide A. The acetyltransferase nsrL has a strict substrate specificity and uses only blennolide A but not blennolide C to yield 5-acetylblennolide A as the single-acetylated product. In the final step of the biosynthesis, the heterodimerization of the 2 xanthones, blennolide C and 5-acetylblennolide A, is catalyzed by the cytochrome P450 monooxygenase nsrP. NsrP can utilize at least three different xanthones as its substrates to perform the dimerization reaction. The protein is Short chain dehydrogenase/reductase nsrJ of Aspergillus novofumigatus (strain IBT 16806).